The chain runs to 532 residues: Hepatocyte nuclear factor 1-beta-B (532 aa).

A dimerization region spans residues 1–35; sequence MFTDMVSKLTSLQQELLSALLDSGVTKDVLVQALE. Residues 5–36 enclose the HNF-p1 domain; that stretch reads MVSKLTSLQQELLSALLDSGVTKDVLVQALED. Residues 74-95 are disordered; that stretch reads TGAQGKGGKLSGDEGSEDGDDF. The POU-specific atypical domain maps to 102 to 197; that stretch reads RELQSLNTEE…IDRQFDRVQG (96 aa). Residues 222–231 show a composition bias toward gly residues; it reads SSGAAGGSGA. Disordered stretches follow at residues 222-245 and 500-532; these read SSGA…KRMR and EAGQ…LQAW. A DNA-binding region (homeobox; HNF1-type) is located at residues 244–324; it reads MRRNRFKWGP…NRRKEEAFRQ (81 aa). Over residues 505–532 the composition is skewed to polar residues; the sequence is SHPSRYSTMDSSTITHLGSSKQCPLQAW.

It belongs to the HNF1 homeobox family. As to quaternary structure, binds DNA as a dimer. Can form homodimer or heterodimer with HNF1-alpha. As to expression, first expressed at stage 10 in the intermediate mesoderm. Expressed in rhombomere r5 by 14 hpf with expression diminishing by 18 hpf.

It is found in the nucleus. In terms of biological role, transcription factor that binds to the inverted palindrome 5'-GTTAATNATTAAC-3'. Acts downstream of hnf1ba but is not required for induction of rhombomere r5/r6 gene expression in the hindbrain. This Danio rerio (Zebrafish) protein is Hepatocyte nuclear factor 1-beta-B.